A 174-amino-acid chain; its full sequence is Small ribosomal subunit protein uS7c (174 aa).

Belongs to the universal ribosomal protein uS7 family. Part of the 30S ribosomal subunit.

The protein resides in the plastid. It localises to the chloroplast. One of the primary rRNA binding proteins, it binds directly to 16S rRNA where it nucleates assembly of the head domain of the 30S subunit. The chain is Small ribosomal subunit protein uS7c (rps7) from Stigeoclonium helveticum (Green alga).